We begin with the raw amino-acid sequence, 159 residues long: Protein-export protein SecB (159 aa).

It belongs to the SecB family. As to quaternary structure, homotetramer, a dimer of dimers. One homotetramer interacts with 1 SecA dimer.

The protein localises to the cytoplasm. Its function is as follows. One of the proteins required for the normal export of preproteins out of the cell cytoplasm. It is a molecular chaperone that binds to a subset of precursor proteins, maintaining them in a translocation-competent state. It also specifically binds to its receptor SecA. The chain is Protein-export protein SecB from Hahella chejuensis (strain KCTC 2396).